Reading from the N-terminus, the 451-residue chain is MKTITTFENKKVLVLGLARSGEAAARLLAKLGAIVTVNDGKPFDENPTAQSLLEEGIKVVCGSHPLELLDEDFCYMIKNPGIPYNNPMVKKALEKQIPVLTEVELAYLVSESQLIGITGSNGKTTTTTMIAEVLNAGGQRGLLAGNIGFPASEVVQAANDKDTLVMELSSFQLMGVKEFRPHIAVITNLMPTHLDYHGSFEDYVAAKWNIQNQMSSSDFLVLNFNQGISKELAKTTKATIVPFSTTEKVDGAYVQDKQLFYKGENIMSVDDIGVPGSHNVENALATIAVAKLAGISNQVIRETLSNFGGVKHRLQSLGKVHGISFYNDSKSTNILATQKALSGFDNTKVILIAGGLDRGNEFDELIPDITGLKHMVVLGESASRVKRAAQKAGVTYSDALDVRDAVHKAYEVAQQGDVILLSPANASWDMYKNFEVRGDEFIDTFESLRGE.

119-125 lines the ATP pocket; it reads GSNGKTT.

This sequence belongs to the MurCDEF family.

The protein localises to the cytoplasm. It catalyses the reaction UDP-N-acetyl-alpha-D-muramoyl-L-alanine + D-glutamate + ATP = UDP-N-acetyl-alpha-D-muramoyl-L-alanyl-D-glutamate + ADP + phosphate + H(+). It functions in the pathway cell wall biogenesis; peptidoglycan biosynthesis. Functionally, cell wall formation. Catalyzes the addition of glutamate to the nucleotide precursor UDP-N-acetylmuramoyl-L-alanine (UMA). This Streptococcus agalactiae serotype Ia (strain ATCC 27591 / A909 / CDC SS700) protein is UDP-N-acetylmuramoylalanine--D-glutamate ligase.